Consider the following 241-residue polypeptide: Homeobox protein TGIF2LX (241 aa).

Disordered stretches follow at residues 1-58 and 126-209; these read MEAA…GNLP and TGKD…VSPE. Over residues 21–39 the composition is skewed to polar residues; it reads AKTQSPAQDTSIMSRNNAD. The segment at residues 48–111 is a DNA-binding region (homeobox; TALE-type); that stretch reads EHKKKRKGNL…INARRRILPD (64 aa).

Belongs to the TALE/TGIF homeobox family.

It is found in the nucleus. Its function is as follows. May have a transcription role in testis. This chain is Homeobox protein TGIF2LX (TGIF2LX), found in Gorilla gorilla gorilla (Western lowland gorilla).